A 78-amino-acid chain; its full sequence is Large ribosomal subunit protein bL28 (78 aa).

Residues 1-26 (MARVCQVTGKRPMSGHNVSHANNKTK) are disordered.

The protein belongs to the bacterial ribosomal protein bL28 family.

The chain is Large ribosomal subunit protein bL28 from Nitrosomonas europaea (strain ATCC 19718 / CIP 103999 / KCTC 2705 / NBRC 14298).